Consider the following 632-residue polypeptide: Pescadillo homolog (632 aa).

Positions 306–341 are disordered; the sequence is GDDADVDMDEGAKETDEEEDEDFVERPSKAQEVDDV. Residues 307–328 are compositionally biased toward acidic residues; the sequence is DDADVDMDEGAKETDEEEDEDF. The BRCT domain maps to 361-459; it reads RQNLLFSPYT…KIISSEGYGP (99 aa). 3 disordered regions span residues 485-535, 565-585, and 601-632; these read GEKA…QNPS, TKVHAKKVPASQKEKKGEEDL, and MQYSNREKAAEKEKLEKKRKAIEKRKAKEAKA. The span at 492 to 516 shows a compositional bias: acidic residues; sequence QEGEEEEEAAEQDEGESEDEEEDGK. The segment covering 521-531 has biased composition (low complexity); the sequence is AEYPPALLAAA. Composition is skewed to basic and acidic residues over residues 576–585 and 605–616; these read QKEKKGEEDL and NREKAAEKEKLE. Residues 595–632 are a coiled coil; that stretch reads AKLYEKMQYSNREKAAEKEKLEKKRKAIEKRKAKEAKA.

Belongs to the pescadillo family. In terms of assembly, component of the NOP7 complex, composed of ERB1, NOP7 and YTM1. The complex is held together by ERB1, which interacts with NOP7 via its N-terminal domain and with YTM1 via a high-affinity interaction between the seven-bladed beta-propeller domains of the 2 proteins. The NOP7 complex associates with the 66S pre-ribosome.

Its subcellular location is the nucleus. It localises to the nucleolus. It is found in the nucleoplasm. Its function is as follows. Component of the NOP7 complex, which is required for maturation of the 25S and 5.8S ribosomal RNAs and formation of the 60S ribosome. This is Pescadillo homolog from Cryptococcus neoformans var. neoformans serotype D (strain B-3501A) (Filobasidiella neoformans).